The following is a 94-amino-acid chain: MTKSELIERLAGQQSHIPAKVVEDAVKEMLEQMASTLAEGDRIEIRGFGSFSLHYRAPRVGRNPKTGDKVELEGKYVPHFKPGKELRDRANIYG.

It belongs to the bacterial histone-like protein family. As to quaternary structure, heterodimer of an alpha and a beta chain.

Functionally, this protein is one of the two subunits of integration host factor, a specific DNA-binding protein that functions in genetic recombination as well as in transcriptional and translational control. The polypeptide is Integration host factor subunit beta (Pectobacterium atrosepticum (strain SCRI 1043 / ATCC BAA-672) (Erwinia carotovora subsp. atroseptica)).